A 793-amino-acid polypeptide reads, in one-letter code: Serine/threonine-protein kinase MARK1 (793 aa).

Positions 1–40 (MSARTPLPTVNERDTENHTSVDGYTETHIPPTKSSSRQNI) are disordered. Threonine 5 bears the Phosphothreonine mark. In terms of domain architecture, Protein kinase spans 60–311 (YRLQKTIGKG…LEQIMKDRWM (252 aa)). ATP contacts are provided by residues 66 to 74 (IGKGNFAKV) and lysine 89. Aspartate 182 functions as the Proton acceptor in the catalytic mechanism. A Phosphothreonine modification is found at threonine 208. Threonine 215 is subject to Phosphothreonine; by LKB1 and TAOK1. Residue serine 219 is modified to Phosphoserine; by GSK3-beta. Residues 329-370 (DLNDAKRIDIMVTMGFARDEINDALVSQKYDEVMATYILLGR) enclose the UBA domain. Disordered stretches follow at residues 377-499 (GGES…GGSM) and 517-697 (LQNG…KPRS). A compositionally biased stretch (polar residues) spans 380 to 403 (SLSSGNLCQRSRPSSDLNNSTLQS). Phosphoserine is present on residues serine 382, serine 390, serine 393, serine 403, serine 423, and serine 444. Over residues 447–459 (SEQKEEWDKDTAR) the composition is skewed to basic and acidic residues. Polar residues predominate over residues 462-473 (GSTTVGSKSEVT). A Phosphoserine modification is found at serine 475. The segment covering 487–499 (AGPSNNVYSGGSM) has biased composition (polar residues). Composition is skewed to low complexity over residues 523–547 (SSLTEMSASSMSSTGSTVASAGPSA) and 585–599 (PAASPSAHSISASTP). Serine 588 carries the phosphoserine modification. Threonine 613 is modified (phosphothreonine; by PKC/PRKCZ). A compositionally biased stretch (polar residues) spans 647 to 657 (GTSTGIISKIT). Basic and acidic residues-rich tracts occupy residues 661–676 (VRRDPSEGEASGRTDT) and 683–695 (EPKDKEEGKEAKP). Serine 666 carries the post-translational modification Phosphoserine. Residues 744 to 793 (DARQDSLVQWEMEVCKLPRLSLNGVRFKRISGTSIAFKNIASKIANELKL) form the KA1 domain.

The protein belongs to the protein kinase superfamily. CAMK Ser/Thr protein kinase family. SNF1 subfamily. As to quaternary structure, interacts with MAPT/TAU. The cofactor is Mg(2+). Phosphorylation at Thr-613 by PRKCZ/aPKC in polarized epithelial cells inhibits the kinase activity. Phosphorylated at Thr-215 by STK11/LKB1 in complex with STE20-related adapter-alpha (STRADA) pseudo kinase and CAB39. Phosphorylation at Thr-215 by TAOK1 activates the kinase activity, leading to phosphorylation and detachment of MAPT/TAU from microtubules. Phosphorylation at Ser-219 by GSK3-beta (GSK3B) inhibits the kinase activity. In terms of tissue distribution, highly expressed in brain and spleen and at lower levels in kidney and skeletal muscle.

It localises to the cell membrane. Its subcellular location is the cytoplasm. The protein resides in the cytoskeleton. It is found in the cell projection. The protein localises to the dendrite. It carries out the reaction L-seryl-[protein] + ATP = O-phospho-L-seryl-[protein] + ADP + H(+). The enzyme catalyses L-threonyl-[protein] + ATP = O-phospho-L-threonyl-[protein] + ADP + H(+). It catalyses the reaction L-seryl-[tau protein] + ATP = O-phospho-L-seryl-[tau protein] + ADP + H(+). The catalysed reaction is L-threonyl-[tau protein] + ATP = O-phospho-L-threonyl-[tau protein] + ADP + H(+). Activated by phosphorylation on Thr-215. Inhibited by phosphorylation at Ser-219. In terms of biological role, serine/threonine-protein kinase. Involved in cell polarity and microtubule dynamics regulation. Phosphorylates DCX, MAP2 and MAP4. Phosphorylates the microtubule-associated protein MAPT/TAU. Involved in cell polarity by phosphorylating the microtubule-associated proteins MAP2, MAP4 and MAPT/TAU at KXGS motifs, causing detachment from microtubules, and their disassembly. Involved in the regulation of neuronal migration through its dual activities in regulating cellular polarity and microtubule dynamics, possibly by phosphorylating and regulating DCX. Also acts as a positive regulator of the Wnt signaling pathway, probably by mediating phosphorylation of dishevelled proteins (DVL1, DVL2 and/or DVL3). The chain is Serine/threonine-protein kinase MARK1 from Rattus norvegicus (Rat).